The sequence spans 365 residues: Flagellar P-ring protein (365 aa).

The N-terminal stretch at methionine 1–alanine 19 is a signal peptide.

The protein belongs to the FlgI family. The basal body constitutes a major portion of the flagellar organelle and consists of four rings (L,P,S, and M) mounted on a central rod.

The protein resides in the periplasm. It localises to the bacterial flagellum basal body. In terms of biological role, assembles around the rod to form the L-ring and probably protects the motor/basal body from shearing forces during rotation. This chain is Flagellar P-ring protein, found in Sodalis glossinidius (strain morsitans).